Reading from the N-terminus, the 230-residue chain is 7-cyano-7-deazaguanine synthase (230 aa).

10-20 is a binding site for ATP; sequence LSGGLDSATTA. Residues Cys-191, Cys-199, Cys-202, and Cys-205 each contribute to the Zn(2+) site.

Belongs to the QueC family. It depends on Zn(2+) as a cofactor.

It catalyses the reaction 7-carboxy-7-deazaguanine + NH4(+) + ATP = 7-cyano-7-deazaguanine + ADP + phosphate + H2O + H(+). Its pathway is purine metabolism; 7-cyano-7-deazaguanine biosynthesis. Its function is as follows. Catalyzes the ATP-dependent conversion of 7-carboxy-7-deazaguanine (CDG) to 7-cyano-7-deazaguanine (preQ(0)). In Gloeothece citriformis (strain PCC 7424) (Cyanothece sp. (strain PCC 7424)), this protein is 7-cyano-7-deazaguanine synthase.